Reading from the N-terminus, the 145-residue chain is D-aminoacyl-tRNA deacylase (145 aa).

A Gly-cisPro motif, important for rejection of L-amino acids motif is present at residues 137-138 (GP).

It belongs to the DTD family. As to quaternary structure, homodimer.

It is found in the cytoplasm. The enzyme catalyses glycyl-tRNA(Ala) + H2O = tRNA(Ala) + glycine + H(+). The catalysed reaction is a D-aminoacyl-tRNA + H2O = a tRNA + a D-alpha-amino acid + H(+). In terms of biological role, an aminoacyl-tRNA editing enzyme that deacylates mischarged D-aminoacyl-tRNAs. Also deacylates mischarged glycyl-tRNA(Ala), protecting cells against glycine mischarging by AlaRS. Acts via tRNA-based rather than protein-based catalysis; rejects L-amino acids rather than detecting D-amino acids in the active site. By recycling D-aminoacyl-tRNA to D-amino acids and free tRNA molecules, this enzyme counteracts the toxicity associated with the formation of D-aminoacyl-tRNA entities in vivo and helps enforce protein L-homochirality. The sequence is that of D-aminoacyl-tRNA deacylase from Pseudomonas entomophila (strain L48).